The following is a 418-amino-acid chain: Metacaspase-4 (418 aa).

Catalysis depends on residues H86 and C139. C139 carries the post-translational modification S-nitrosocysteine. The segment at 153–172 (GESTKKEAEDEDESEESSSR) is disordered.

It belongs to the peptidase C14B family. Post-translationally, the two subunits are derived from the precursor sequence by an autocatalytic mechanism. In terms of tissue distribution, expressed in roots, cotyledons, leaves, cauline leaves, pollen and embryos.

Its subcellular location is the cytoplasm. It is found in the cytosol. Its activity is regulated as follows. Activated by Ca(2+) which induces self-processing and accelerates the rate of the enzyme activity, but has no effect on Km. In terms of biological role, cysteine protease that cleaves specifically after arginine or lysine residues. Does not cleave caspase-specific substrates. Plays a positive regulatory role in biotic and abiotic stress-induced programmed cell death. The protein is Metacaspase-4 (AMC4) of Arabidopsis thaliana (Mouse-ear cress).